Reading from the N-terminus, the 426-residue chain is 3-phosphoshikimate 1-carboxyvinyltransferase (426 aa).

3-phosphoshikimate-binding residues include Lys-22, Ser-23, and Arg-27. Residue Lys-22 participates in phosphoenolpyruvate binding. Phosphoenolpyruvate contacts are provided by Gly-96 and Arg-124. Ser-170, Ser-171, Gln-172, Ser-198, Asp-314, Asn-337, and Lys-341 together coordinate 3-phosphoshikimate. Gln-172 is a binding site for phosphoenolpyruvate. Catalysis depends on Asp-314, which acts as the Proton acceptor. Positions 345, 387, and 412 each coordinate phosphoenolpyruvate.

The protein belongs to the EPSP synthase family. Monomer.

It localises to the cytoplasm. It catalyses the reaction 3-phosphoshikimate + phosphoenolpyruvate = 5-O-(1-carboxyvinyl)-3-phosphoshikimate + phosphate. It participates in metabolic intermediate biosynthesis; chorismate biosynthesis; chorismate from D-erythrose 4-phosphate and phosphoenolpyruvate: step 6/7. In terms of biological role, catalyzes the transfer of the enolpyruvyl moiety of phosphoenolpyruvate (PEP) to the 5-hydroxyl of shikimate-3-phosphate (S3P) to produce enolpyruvyl shikimate-3-phosphate and inorganic phosphate. The chain is 3-phosphoshikimate 1-carboxyvinyltransferase from Vibrio atlanticus (strain LGP32) (Vibrio splendidus (strain Mel32)).